A 485-amino-acid chain; its full sequence is Ribulose bisphosphate carboxylase large chain (485 aa).

Positions 1–2 (MS) are excised as a propeptide. At Pro-3 the chain carries N-acetylproline. Residue Lys-14 is modified to N6,N6,N6-trimethyllysine. The substrate site is built by Asn-123 and Thr-173. Lys-175 acts as the Proton acceptor in catalysis. Lys-177 is a binding site for substrate. Mg(2+) is bound by residues Lys-201, Asp-203, and Glu-204. Residue Lys-201 is modified to N6-carboxylysine. Catalysis depends on His-294, which acts as the Proton acceptor. Substrate contacts are provided by Arg-295, His-327, and Ser-379.

The protein belongs to the RuBisCO large chain family. Type I subfamily. Heterohexadecamer of 8 large chains and 8 small chains; disulfide-linked. The disulfide link is formed within the large subunit homodimers. Mg(2+) serves as cofactor. In terms of processing, the disulfide bond which can form in the large chain dimeric partners within the hexadecamer appears to be associated with oxidative stress and protein turnover.

It localises to the plastid. Its subcellular location is the chloroplast. The catalysed reaction is 2 (2R)-3-phosphoglycerate + 2 H(+) = D-ribulose 1,5-bisphosphate + CO2 + H2O. The enzyme catalyses D-ribulose 1,5-bisphosphate + O2 = 2-phosphoglycolate + (2R)-3-phosphoglycerate + 2 H(+). In terms of biological role, ruBisCO catalyzes two reactions: the carboxylation of D-ribulose 1,5-bisphosphate, the primary event in carbon dioxide fixation, as well as the oxidative fragmentation of the pentose substrate in the photorespiration process. Both reactions occur simultaneously and in competition at the same active site. In Flaveria pringlei, this protein is Ribulose bisphosphate carboxylase large chain.